Here is a 427-residue protein sequence, read N- to C-terminus: 3-phosphoshikimate 1-carboxyvinyltransferase (427 aa).

The 3-phosphoshikimate site is built by K22, S23, and R27. A phosphoenolpyruvate-binding site is contributed by K22. Phosphoenolpyruvate contacts are provided by G96 and R124. S169, S170, Q171, S197, D313, N336, and K340 together coordinate 3-phosphoshikimate. Q171 contributes to the phosphoenolpyruvate binding site. D313 acts as the Proton acceptor in catalysis. Phosphoenolpyruvate-binding residues include R344, R386, and K411.

The protein belongs to the EPSP synthase family. As to quaternary structure, monomer.

It is found in the cytoplasm. It catalyses the reaction 3-phosphoshikimate + phosphoenolpyruvate = 5-O-(1-carboxyvinyl)-3-phosphoshikimate + phosphate. Its pathway is metabolic intermediate biosynthesis; chorismate biosynthesis; chorismate from D-erythrose 4-phosphate and phosphoenolpyruvate: step 6/7. Its function is as follows. Catalyzes the transfer of the enolpyruvyl moiety of phosphoenolpyruvate (PEP) to the 5-hydroxyl of shikimate-3-phosphate (S3P) to produce enolpyruvyl shikimate-3-phosphate and inorganic phosphate. This Escherichia coli O1:K1 / APEC protein is 3-phosphoshikimate 1-carboxyvinyltransferase.